The following is a 305-amino-acid chain: Coenzyme PQQ synthesis protein B (305 aa).

This sequence belongs to the PqqB family.

It participates in cofactor biosynthesis; pyrroloquinoline quinone biosynthesis. In terms of biological role, may be involved in the transport of PQQ or its precursor to the periplasm. The polypeptide is Coenzyme PQQ synthesis protein B (Cupriavidus taiwanensis (strain DSM 17343 / BCRC 17206 / CCUG 44338 / CIP 107171 / LMG 19424 / R1) (Ralstonia taiwanensis (strain LMG 19424))).